The primary structure comprises 364 residues: PDZ and LIM domain protein 3 (364 aa).

The 84-residue stretch at 1–84 (MPQTVILPGP…QLCLKIDRGE (84 aa)) folds into the PDZ domain. A phosphoserine mark is found at Ser-18, Ser-93, and Ser-264. The region spanning 292-351 (PLCDKCGSGIVGAVVKARDKYRHPECFVCADCNLNLKQKGYFFIEGELYCETHARARTKP) is the LIM zinc-binding domain.

In terms of assembly, interacts with ACTN2. Forms a heterodimer with PDLIM4 (via LIM domain). In terms of tissue distribution, isoform 1 is highly expressed in differentiated skeletal muscle. Isoform 2 is heart-specific.

It localises to the cytoplasm. The protein localises to the myofibril. It is found in the sarcomere. The protein resides in the z line. May play a role in the organization of actin filament arrays within muscle cells. The protein is PDZ and LIM domain protein 3 (PDLIM3) of Homo sapiens (Human).